The sequence spans 901 residues: Mediator of RNA polymerase II transcription subunit 14 (901 aa).

Belongs to the Mediator complex subunit 14 family. As to quaternary structure, component of the Mediator complex.

It localises to the nucleus. Its function is as follows. Component of the Mediator complex, a coactivator involved in the regulated transcription of nearly all RNA polymerase II-dependent genes. Mediator functions as a bridge to convey information from gene-specific regulatory proteins to the basal RNA polymerase II transcription machinery. Mediator is recruited to promoters by direct interactions with regulatory proteins and serves as a scaffold for the assembly of a functional preinitiation complex with RNA polymerase II and the general transcription factors. This is Mediator of RNA polymerase II transcription subunit 14 (RGR1) from Yarrowia lipolytica (strain CLIB 122 / E 150) (Yeast).